A 111-amino-acid chain; its full sequence is Large ribosomal subunit protein uL23 (111 aa).

The protein belongs to the universal ribosomal protein uL23 family. Part of the 50S ribosomal subunit. Contacts protein L29, and trigger factor when it is bound to the ribosome.

Its function is as follows. One of the early assembly proteins it binds 23S rRNA. One of the proteins that surrounds the polypeptide exit tunnel on the outside of the ribosome. Forms the main docking site for trigger factor binding to the ribosome. The sequence is that of Large ribosomal subunit protein uL23 from Nitrosomonas eutropha (strain DSM 101675 / C91 / Nm57).